The following is a 176-amino-acid chain: Shikimate kinase (176 aa).

An ATP-binding site is contributed by 14-19 (GAGKST). Residue Ser18 coordinates Mg(2+). Residues Asp36, Arg60, and Gly83 each coordinate substrate. Arg121 is an ATP binding site. Arg140 serves as a coordination point for substrate.

The protein belongs to the shikimate kinase family. Monomer. Requires Mg(2+) as cofactor.

Its subcellular location is the cytoplasm. It carries out the reaction shikimate + ATP = 3-phosphoshikimate + ADP + H(+). The protein operates within metabolic intermediate biosynthesis; chorismate biosynthesis; chorismate from D-erythrose 4-phosphate and phosphoenolpyruvate: step 5/7. In terms of biological role, catalyzes the specific phosphorylation of the 3-hydroxyl group of shikimic acid using ATP as a cosubstrate. In Francisella tularensis subsp. tularensis (strain FSC 198), this protein is Shikimate kinase.